The sequence spans 441 residues: Xaa-Pro dipeptidase (441 aa).

Mn(2+)-binding residues include Asp244, Asp255, His336, Glu381, and Glu420.

The protein belongs to the peptidase M24B family. Bacterial-type prolidase subfamily. The cofactor is Mn(2+).

The enzyme catalyses Xaa-L-Pro dipeptide + H2O = an L-alpha-amino acid + L-proline. Functionally, splits dipeptides with a prolyl residue in the C-terminal position. In Xanthomonas axonopodis pv. citri (strain 306), this protein is Xaa-Pro dipeptidase.